Reading from the N-terminus, the 205-residue chain is uncharacterized protein (205 aa).

Residues 72 to 114 (ARVSPYGYESDSENEEYTRISSATSSNVLTDSPTTTQDDPTGR) are disordered. The span at 90–100 (RISSATSSNVL) shows a compositional bias: polar residues. A compositionally biased stretch (low complexity) spans 101–110 (TDSPTTTQDD).

This is an uncharacterized protein from Equus caballus (Horse).